The following is a 246-amino-acid chain: 4-hydroxy-tetrahydrodipicolinate reductase (246 aa).

NAD(+)-binding positions include 8–13 (GAKGRM), 74–76 (GTT), and 101–104 (APNF). Histidine 131 acts as the Proton donor/acceptor in catalysis. Histidine 132 contributes to the (S)-2,3,4,5-tetrahydrodipicolinate binding site. The active-site Proton donor is lysine 135. Residue 141-142 (GT) participates in (S)-2,3,4,5-tetrahydrodipicolinate binding.

This sequence belongs to the DapB family.

It localises to the cytoplasm. The enzyme catalyses (S)-2,3,4,5-tetrahydrodipicolinate + NAD(+) + H2O = (2S,4S)-4-hydroxy-2,3,4,5-tetrahydrodipicolinate + NADH + H(+). It carries out the reaction (S)-2,3,4,5-tetrahydrodipicolinate + NADP(+) + H2O = (2S,4S)-4-hydroxy-2,3,4,5-tetrahydrodipicolinate + NADPH + H(+). Its pathway is amino-acid biosynthesis; L-lysine biosynthesis via DAP pathway; (S)-tetrahydrodipicolinate from L-aspartate: step 4/4. Catalyzes the conversion of 4-hydroxy-tetrahydrodipicolinate (HTPA) to tetrahydrodipicolinate. This chain is 4-hydroxy-tetrahydrodipicolinate reductase, found in Cutibacterium acnes (strain DSM 16379 / KPA171202) (Propionibacterium acnes).